We begin with the raw amino-acid sequence, 164 residues long: Cytochrome c-type biogenesis protein CcmE (164 aa).

Residues 1 to 8 are Cytoplasmic-facing; the sequence is MNPRRKQR. The helical; Signal-anchor for type II membrane protein transmembrane segment at 9–29 threads the bilayer; it reads LAVVGIIGFLIVSAVGLMLYA. The Periplasmic portion of the chain corresponds to 30-164; the sequence is LNDSIDLFYT…YESSNGAGSK (135 aa). Positions 128 and 132 each coordinate heme. Residues 142 to 164 form a disordered region; it reads KGIKHVKPENMPTYESSNGAGSK. Residues 154–164 are compositionally biased toward polar residues; the sequence is TYESSNGAGSK.

It belongs to the CcmE/CycJ family.

Its subcellular location is the cell inner membrane. Heme chaperone required for the biogenesis of c-type cytochromes. Transiently binds heme delivered by CcmC and transfers the heme to apo-cytochromes in a process facilitated by CcmF and CcmH. The sequence is that of Cytochrome c-type biogenesis protein CcmE from Alteromonas mediterranea (strain DSM 17117 / CIP 110805 / LMG 28347 / Deep ecotype).